Consider the following 459-residue polypeptide: Putative metabolite transport protein YdjK (459 aa).

Residues 1–25 (MEQITKPHCGARLDRLPDCRWHSSM) are Cytoplasmic-facing. A helical membrane pass occupies residues 26 to 46 (FAIVAFGLLVCWSNAVGGLIL). Residues 47–60 (AQLKALGWTDNSTT) lie on the Periplasmic side of the membrane. The helical transmembrane segment at 61-81 (ATFSAITTAGMFLGALVGGII) threads the bilayer. Residues 82–90 (GDKTGRRNA) are Cytoplasmic-facing. A helical membrane pass occupies residues 91 to 111 (FILYEAIHIASMVVGAFSPNM). A topological domain (periplasmic) is located at residue D112. Residues 113–133 (FLIACRFVMGVGLGALLVTLF) traverse the membrane as a helical segment. Residues 134-153 (AGFTEYMPGRNRGTWSSRVS) lie on the Cytoplasmic side of the membrane. Residues 154-174 (FIGNWSYPLCSLIAMGLTPLI) traverse the membrane as a helical segment. The Periplasmic segment spans residues 175 to 181 (SAEWNWR). A helical transmembrane segment spans residues 182–202 (VQLLIPAILSLIATALAWRYF). Topologically, residues 203–271 (PESPRWLESR…LLKRVILGSC (69 aa)) are cytoplasmic. A helical membrane pass occupies residues 272-292 (VLIAMNVVQYTLINWLPTIFM). Residues 293–301 (TQGINLKDS) lie on the Periplasmic side of the membrane. A helical membrane pass occupies residues 302–322 (IVLNTMSMFGAPFGIFIAMLV). Topologically, residues 323–329 (MDKIPRK) are cytoplasmic. The chain crosses the membrane as a helical span at residues 330-350 (TMGVGLLILIAVLGYIYSLQT). A topological domain (periplasmic) is located at residue S351. Residues 352 to 372 (MLLITLIGFFLITFVYMYVCY) form a helical membrane-spanning segment. At 373 to 399 (ASAVYVPEIWPTEAKLRGSGLANAVGR) the chain is on the cytoplasmic side. Helical transmembrane passes span 400–420 (ISGI…GVTG) and 421–441 (VFIL…TIGI). The Cytoplasmic portion of the chain corresponds to 442–459 (ETKGVSVESLSIDAVANK).

It belongs to the major facilitator superfamily. Sugar transporter (TC 2.A.1.1) family.

The protein resides in the cell inner membrane. This is Putative metabolite transport protein YdjK (ydjK) from Escherichia coli (strain K12).